We begin with the raw amino-acid sequence, 387 residues long: Sorting nexin-7 (387 aa).

A PX domain is found at 30 to 151 (KDLFITVDEP…IFLTAQAWEL (122 aa)). Arg-73, Gln-75, Lys-103, and Arg-117 together coordinate a 1,2-diacyl-sn-glycero-3-phospho-(1D-myo-inositol-3-phosphate). The BAR domain occupies 178–387 (GVKNRPEEFM…HLEETSEDKP (210 aa)).

Belongs to the sorting nexin family. As to quaternary structure, heterodimer; heterodimerizes with SNX4.

The protein resides in the early endosome membrane. Its function is as follows. Involved in the regulation of endocytosis and in several stages of intracellular trafficking. Together with SNX4, involved in autophagosome assembly by regulating trafficking and recycling of phospholipid scramblase ATG9A. This Macaca fascicularis (Crab-eating macaque) protein is Sorting nexin-7 (SNX7).